The chain runs to 177 residues: Large ribosomal subunit protein uL6 (177 aa).

This sequence belongs to the universal ribosomal protein uL6 family. As to quaternary structure, part of the 50S ribosomal subunit.

In terms of biological role, this protein binds to the 23S rRNA, and is important in its secondary structure. It is located near the subunit interface in the base of the L7/L12 stalk, and near the tRNA binding site of the peptidyltransferase center. The protein is Large ribosomal subunit protein uL6 of Brucella anthropi (strain ATCC 49188 / DSM 6882 / CCUG 24695 / JCM 21032 / LMG 3331 / NBRC 15819 / NCTC 12168 / Alc 37) (Ochrobactrum anthropi).